A 211-amino-acid polypeptide reads, in one-letter code: Uracil phosphoribosyltransferase (211 aa).

5-phospho-alpha-D-ribose 1-diphosphate is bound by residues arginine 78, arginine 103, and aspartate 130–threonine 138. Uracil contacts are provided by residues isoleucine 195 and glycine 200–alanine 202. Aspartate 201 serves as a coordination point for 5-phospho-alpha-D-ribose 1-diphosphate.

It belongs to the UPRTase family. The cofactor is Mg(2+).

It carries out the reaction UMP + diphosphate = 5-phospho-alpha-D-ribose 1-diphosphate + uracil. Its pathway is pyrimidine metabolism; UMP biosynthesis via salvage pathway; UMP from uracil: step 1/1. With respect to regulation, allosterically activated by GTP. Its function is as follows. Catalyzes the conversion of uracil and 5-phospho-alpha-D-ribose 1-diphosphate (PRPP) to UMP and diphosphate. The protein is Uracil phosphoribosyltransferase of Streptomyces griseus subsp. griseus (strain JCM 4626 / CBS 651.72 / NBRC 13350 / KCC S-0626 / ISP 5235).